Here is a 485-residue protein sequence, read N- to C-terminus: NADH-quinone oxidoreductase subunit N (485 aa).

Transmembrane regions (helical) follow at residues 8–28 (LIALLPLLIVGLTVVVVMLSI), 35–55 (FLNATLSVIGLNAALVSLWFV), 71–91 (GFAMLYTGLVLLASLATCTFA), 105–125 (FYLLVLIAALGGILLANANHL), 127–147 (SLFLGIELISLPLFGLVGYAF), 159–179 (YTILSAAASSFLLFGMALVYA), 203–223 (LLAGFGLMIVGLGFKLSLVPF), 235–255 (PAPVSTFLATASKIAIFGVVM), 271–291 (VVLAIIAFASIIFGNLMALSQ), 297–317 (LLGYSSISHLGYLLVALIALQ), 326–346 (VGVYLAGYLFSSLGAFGVVSL), 373–393 (AAVMTVMMLSLAGIPMTLGFI), 408–430 (WWLVGAVVVGSAIGLYYYLRVAV), and 455–475 (IVVLISALLVLVLGVWPQPLI).

It belongs to the complex I subunit 2 family. NDH-1 is composed of 13 different subunits. Subunits NuoA, H, J, K, L, M, N constitute the membrane sector of the complex.

The protein resides in the cell inner membrane. The enzyme catalyses a quinone + NADH + 5 H(+)(in) = a quinol + NAD(+) + 4 H(+)(out). NDH-1 shuttles electrons from NADH, via FMN and iron-sulfur (Fe-S) centers, to quinones in the respiratory chain. The immediate electron acceptor for the enzyme in this species is believed to be ubiquinone. Couples the redox reaction to proton translocation (for every two electrons transferred, four hydrogen ions are translocated across the cytoplasmic membrane), and thus conserves the redox energy in a proton gradient. The protein is NADH-quinone oxidoreductase subunit N of Escherichia coli (strain ATCC 8739 / DSM 1576 / NBRC 3972 / NCIMB 8545 / WDCM 00012 / Crooks).